A 284-amino-acid polypeptide reads, in one-letter code: Bifunctional protein FolD (284 aa).

Residues 166 to 168 and isoleucine 232 each bind NADP(+); that span reads GAS.

The protein belongs to the tetrahydrofolate dehydrogenase/cyclohydrolase family. As to quaternary structure, homodimer.

The catalysed reaction is (6R)-5,10-methylene-5,6,7,8-tetrahydrofolate + NADP(+) = (6R)-5,10-methenyltetrahydrofolate + NADPH. It carries out the reaction (6R)-5,10-methenyltetrahydrofolate + H2O = (6R)-10-formyltetrahydrofolate + H(+). It participates in one-carbon metabolism; tetrahydrofolate interconversion. In terms of biological role, catalyzes the oxidation of 5,10-methylenetetrahydrofolate to 5,10-methenyltetrahydrofolate and then the hydrolysis of 5,10-methenyltetrahydrofolate to 10-formyltetrahydrofolate. This Pseudomonas fluorescens (strain Pf0-1) protein is Bifunctional protein FolD.